The sequence spans 147 residues: Hemoglobin subunit beta (147 aa).

Residue Val-2 is modified to N-acetylvaline. A Globin domain is found at 3–147; sequence HLTPEEKNAV…VANALAHKYH (145 aa). Thr-13 carries the phosphothreonine modification. A Phosphoserine modification is found at Ser-45. Residue Lys-60 is modified to N6-acetyllysine. His-64 is a binding site for heme b. An N6-acetyllysine modification is found at Lys-83. His-93 is a binding site for heme b. At Cys-94 the chain carries S-nitrosocysteine. Lys-145 carries the post-translational modification N6-acetyllysine.

The protein belongs to the globin family. As to quaternary structure, heterotetramer of two alpha chains and two beta chains. As to expression, red blood cells.

In terms of biological role, involved in oxygen transport from the lung to the various peripheral tissues. The protein is Hemoglobin subunit beta (HBB) of Macaca fascicularis (Crab-eating macaque).